The chain runs to 930 residues: Translation initiation factor IF-2 (930 aa).

The disordered stretch occupies residues 51–325 (PGAGKSAAKP…TREIGGVKVP (275 aa)). Composition is skewed to low complexity over residues 56-111 (SAAK…KPGV) and 121-162 (TPAA…GNNP). Residues 263–295 (RPGGGPGGGPGRPGGPGGRGGRGNAQGAFGRGG) are compositionally biased toward gly residues. The span at 296–307 (GPRKGRKSKRAK) shows a compositional bias: basic residues. Residues 308 to 320 (RQEFEQQHTREIG) are compositionally biased toward basic and acidic residues. The region spanning 422 to 596 (PRPAVVTVMG…LTADAALELT (175 aa)) is the tr-type G domain. The interval 431–438 (GHVDHGKT) is G1. 431-438 (GHVDHGKT) provides a ligand contact to GTP. Residues 456–460 (GITQH) form a G2 region. A G3 region spans residues 481–484 (DTPG). Residues 481-485 (DTPGH) and 535-538 (NKID) each bind GTP. The tract at residues 535–538 (NKID) is G4. The segment at 571–573 (SAR) is G5.

The protein belongs to the TRAFAC class translation factor GTPase superfamily. Classic translation factor GTPase family. IF-2 subfamily.

Its subcellular location is the cytoplasm. One of the essential components for the initiation of protein synthesis. Protects formylmethionyl-tRNA from spontaneous hydrolysis and promotes its binding to the 30S ribosomal subunits. Also involved in the hydrolysis of GTP during the formation of the 70S ribosomal complex. The sequence is that of Translation initiation factor IF-2 from Micrococcus luteus (strain ATCC 4698 / DSM 20030 / JCM 1464 / CCM 169 / CCUG 5858 / IAM 1056 / NBRC 3333 / NCIMB 9278 / NCTC 2665 / VKM Ac-2230) (Micrococcus lysodeikticus).